The primary structure comprises 140 residues: Transcription antitermination protein NusB (140 aa).

This sequence belongs to the NusB family.

In terms of biological role, involved in transcription antitermination. Required for transcription of ribosomal RNA (rRNA) genes. Binds specifically to the boxA antiterminator sequence of the ribosomal RNA (rrn) operons. The chain is Transcription antitermination protein NusB from Sorangium cellulosum (strain So ce56) (Polyangium cellulosum (strain So ce56)).